Reading from the N-terminus, the 160-residue chain is Large ribosomal subunit protein uL15 (160 aa).

Basic and acidic residues predominate over residues 1 to 13 (MKLHELSDNDGAA). Positions 1–42 (MKLHELSDNDGAAKKRKRVGRGPGSGTGKMGGRGIKGQKSRS) are disordered. Gly residues predominate over residues 21 to 35 (RGPGSGTGKMGGRGI).

It belongs to the universal ribosomal protein uL15 family. As to quaternary structure, part of the 50S ribosomal subunit.

Its function is as follows. Binds to the 23S rRNA. The protein is Large ribosomal subunit protein uL15 of Roseobacter denitrificans (strain ATCC 33942 / OCh 114) (Erythrobacter sp. (strain OCh 114)).